We begin with the raw amino-acid sequence, 159 residues long: NADH-quinone oxidoreductase subunit I (159 aa).

2 4Fe-4S ferredoxin-type domains span residues 51 to 80 (RRYE…IEAD) and 90 to 119 (TRYD…EGPN). [4Fe-4S] cluster-binding residues include C60, C63, C66, C70, C99, C102, C105, and C109.

It belongs to the complex I 23 kDa subunit family. As to quaternary structure, NDH-1 is composed of 14 different subunits. Subunits NuoA, H, J, K, L, M, N constitute the membrane sector of the complex. The cofactor is [4Fe-4S] cluster.

It is found in the cell inner membrane. It catalyses the reaction a quinone + NADH + 5 H(+)(in) = a quinol + NAD(+) + 4 H(+)(out). In terms of biological role, NDH-1 shuttles electrons from NADH, via FMN and iron-sulfur (Fe-S) centers, to quinones in the respiratory chain. The immediate electron acceptor for the enzyme in this species is believed to be ubiquinone. Couples the redox reaction to proton translocation (for every two electrons transferred, four hydrogen ions are translocated across the cytoplasmic membrane), and thus conserves the redox energy in a proton gradient. The chain is NADH-quinone oxidoreductase subunit I from Rickettsia felis (strain ATCC VR-1525 / URRWXCal2) (Rickettsia azadi).